Reading from the N-terminus, the 321-residue chain is Ubiquitin-conjugating enzyme E2 U (321 aa).

Residues 4–153 (RAYLLLHRDF…LRLFNRPLQM (150 aa)) enclose the UBC core domain. Catalysis depends on C89, which acts as the Glycyl thioester intermediate. The segment at 285-321 (WKSDTSLYENDTDEPREEEVEDLISWTNTLNTNTSED) is disordered. Residues 294–306 (NDTDEPREEEVED) are compositionally biased toward acidic residues. A compositionally biased stretch (polar residues) spans 309 to 321 (SWTNTLNTNTSED).

Belongs to the ubiquitin-conjugating enzyme family. In terms of processing, autoubiquitinated in vitro in the presence of UBR5.

The enzyme catalyses S-ubiquitinyl-[E1 ubiquitin-activating enzyme]-L-cysteine + [E2 ubiquitin-conjugating enzyme]-L-cysteine = [E1 ubiquitin-activating enzyme]-L-cysteine + S-ubiquitinyl-[E2 ubiquitin-conjugating enzyme]-L-cysteine.. Its pathway is protein modification; protein ubiquitination. Its function is as follows. Catalyzes the covalent attachment of ubiquitin to other proteins. This is Ubiquitin-conjugating enzyme E2 U (UBE2U) from Homo sapiens (Human).